A 203-amino-acid polypeptide reads, in one-letter code: ATP-dependent Clp protease proteolytic subunit 2 (203 aa).

Ser98 serves as the catalytic Nucleophile. His123 is a catalytic residue.

Belongs to the peptidase S14 family. In terms of assembly, fourteen ClpP subunits assemble into 2 heptameric rings which stack back to back to give a disk-like structure with a central cavity, resembling the structure of eukaryotic proteasomes.

The protein resides in the cytoplasm. The enzyme catalyses Hydrolysis of proteins to small peptides in the presence of ATP and magnesium. alpha-casein is the usual test substrate. In the absence of ATP, only oligopeptides shorter than five residues are hydrolyzed (such as succinyl-Leu-Tyr-|-NHMec, and Leu-Tyr-Leu-|-Tyr-Trp, in which cleavage of the -Tyr-|-Leu- and -Tyr-|-Trp bonds also occurs).. In terms of biological role, cleaves peptides in various proteins in a process that requires ATP hydrolysis. Has a chymotrypsin-like activity. Plays a major role in the degradation of misfolded proteins. This Chlamydia muridarum (strain MoPn / Nigg) protein is ATP-dependent Clp protease proteolytic subunit 2.